Here is a 542-residue protein sequence, read N- to C-terminus: MQTSAMALLARILRAGLRPAPERGGLLGGGAPRRPQPAGARLPAGARAEDKGAGRPGSPPGGGRAEGPRSLAAMPGPRTLANLAEFFCRDGFSRIHEIQQKHTREYGKIFKSHFGPQFVVSIADRDMVAQVLRAEGAAPQRANMESWREYRDLRGRATGLISAEGEQWLKMRSVLRQRILKPKDVAIYSGEVNQVIADLIKRIYLLRSQAEDGETVTNVNDLFFKYSMEGVATILYESRLGCLENSIPQLTVEYIEALELMFSMFKTSMYAGAIPRWLRPFIPKPWREFCRSWDGLFKFSQIHVDNKLRDIQYQMDRGRRVSGGLLTYLFLSQALTLQEIYANVTEMLLAGVDTTSFTLSWTVYLLARHPEVQQTVYREIVKNLGERHVPTAADVPKVPLVRALLKETLRLFPVLPGNGRVTQEDLVIGGYLIPKGTQLALCHYATSYQDENFPRAKEFRPERWLRKGDLDRVDNFGSIPFGHGVRSCIGRRIAELEIHLVVIQLLQHFEIKTSSQTNAVHAKTHGLLTPGGPIHVRFVNRK.

A mitochondrion-targeting transit peptide spans 1-80 (MQTSAMALLA…LAAMPGPRTL (80 aa)). The disordered stretch occupies residues 20–75 (APERGGLLGGGAPRRPQPAGARLPAGARAEDKGAGRPGSPPGGGRAEGPRSLAAMP). Positions 32–46 (PRRPQPAGARLPAGA) are enriched in low complexity. Cys-488 is a heme binding site.

It belongs to the cytochrome P450 family. The cofactor is heme. In terms of tissue distribution, widely expressed, with highest levels in the liver, kidney and pancreas. Expressed in the skin (at protein level).

It localises to the mitochondrion membrane. It catalyses the reaction all-trans-retinol + 2 reduced [adrenodoxin] + O2 + 2 H(+) = all-trans-3,4-didehydroretinol + 2 oxidized [adrenodoxin] + 2 H2O. It carries out the reaction all-trans-retinol + 2 reduced [adrenodoxin] + O2 + 2 H(+) = all-trans-4-hydroxyretinol + 2 oxidized [adrenodoxin] + H2O. The enzyme catalyses all-trans-retinol + 2 reduced [adrenodoxin] + O2 + 2 H(+) = all-trans-3-hydroxyretinol + 2 oxidized [adrenodoxin] + H2O. The protein operates within cofactor metabolism; retinol metabolism. A cytochrome P450 monooxygenase that catalyzes the 3,4 desaturation of all-trans-retinol (also called vitamin A1) to all-trans-3,4-didehydroretinol (also called vitamin A2) in the skin. Desaturates with lower efficiency all-trans retinal and all-trans retinoic acid. Forms minor amounts of 3-hydroxy and 4-hydroxy all-trans-retinol derivatives. Mechanistically, uses molecular oxygen inserting one oxygen atom into a substrate and reducing the second into a water molecule. Two electrons are provided by NADPH via a two-protein mitochondrial transfer system comprising flavoprotein FDXR (adrenodoxin/ferredoxin reductase) and nonheme iron-sulfur protein FDX1 or FDX2 (adrenodoxin/ferredoxin). The polypeptide is Cytochrome P450 27C1 (Homo sapiens (Human)).